The following is a 251-amino-acid chain: Pyridoxine 5'-phosphate synthase (251 aa).

A 3-amino-2-oxopropyl phosphate-binding site is contributed by Asn7. 9 to 10 (DH) serves as a coordination point for 1-deoxy-D-xylulose 5-phosphate. 3-amino-2-oxopropyl phosphate is bound at residue Arg18. His43 (proton acceptor) is an active-site residue. 1-deoxy-D-xylulose 5-phosphate is bound by residues Arg45 and His50. Glu70 acts as the Proton acceptor in catalysis. 1-deoxy-D-xylulose 5-phosphate is bound at residue Thr100. His198 (proton donor) is an active-site residue. 3-amino-2-oxopropyl phosphate contacts are provided by residues Ala199 and 220 to 221 (GH).

The protein belongs to the PNP synthase family. Homooctamer; tetramer of dimers.

The protein localises to the cytoplasm. It carries out the reaction 3-amino-2-oxopropyl phosphate + 1-deoxy-D-xylulose 5-phosphate = pyridoxine 5'-phosphate + phosphate + 2 H2O + H(+). Its pathway is cofactor biosynthesis; pyridoxine 5'-phosphate biosynthesis; pyridoxine 5'-phosphate from D-erythrose 4-phosphate: step 5/5. Functionally, catalyzes the complicated ring closure reaction between the two acyclic compounds 1-deoxy-D-xylulose-5-phosphate (DXP) and 3-amino-2-oxopropyl phosphate (1-amino-acetone-3-phosphate or AAP) to form pyridoxine 5'-phosphate (PNP) and inorganic phosphate. In Dechloromonas aromatica (strain RCB), this protein is Pyridoxine 5'-phosphate synthase.